Consider the following 289-residue polypeptide: MVTHCEHQYLNTVREILANGVRRGDRTGVGTLSVFGDQAKYSLRGQFPLLTTKRVFWRGVLEELLWFIRGSTDSNELSARGVKIWDANGSRDFLARAGLGHREPGDLGPVYGFQWRHFGAAYVDSKTDYRGQGVDQLRDLIGEIKRNPESRRLVLTAWNPADLPAMALPPCHLLCQFYVAGGELSCQLYQRSGDMGLGVPFNIASYSLLTYMVAHLTGLEPGDFIHVLGDAHVYLNHVEPLKLQLTRSPRPFPRLRILRRVEDIDDFRAEDFALEGYHPHAAIPMEMAV.

Residues R26 and 151-152 each bind dUMP; that span reads RR. The active-site Nucleophile is C171. DUMP contacts are provided by residues 191 to 194, N202, and 232 to 234; these read RSGD and HVY. D194 contributes to the (6R)-5,10-methylene-5,6,7,8-tetrahydrofolate binding site. Residue A288 coordinates (6R)-5,10-methylene-5,6,7,8-tetrahydrofolate.

Belongs to the thymidylate synthase family. As to quaternary structure, homodimer.

It catalyses the reaction dUMP + (6R)-5,10-methylene-5,6,7,8-tetrahydrofolate = 7,8-dihydrofolate + dTMP. Its pathway is pyrimidine metabolism; dTTP biosynthesis. The sequence is that of Thymidylate synthase from Equus caballus (Horse).